Consider the following 366-residue polypeptide: Quinolinate synthase (366 aa).

Histidine 44 and serine 61 together coordinate iminosuccinate. [4Fe-4S] cluster is bound at residue cysteine 108. Iminosuccinate contacts are provided by residues 139–141 (YIN) and serine 160. A [4Fe-4S] cluster-binding site is contributed by cysteine 228. Residues 254–256 (HPE) and threonine 271 contribute to the iminosuccinate site. Cysteine 318 provides a ligand contact to [4Fe-4S] cluster.

The protein belongs to the quinolinate synthase family. Type 3 subfamily. [4Fe-4S] cluster is required as a cofactor.

It localises to the cytoplasm. It carries out the reaction iminosuccinate + dihydroxyacetone phosphate = quinolinate + phosphate + 2 H2O + H(+). The protein operates within cofactor biosynthesis; NAD(+) biosynthesis; quinolinate from iminoaspartate: step 1/1. Catalyzes the condensation of iminoaspartate with dihydroxyacetone phosphate to form quinolinate. This is Quinolinate synthase from Listeria monocytogenes serovar 1/2a (strain ATCC BAA-679 / EGD-e).